A 776-amino-acid polypeptide reads, in one-letter code: MDQEMTTVASPDIRVKATSPDSNRAVLEQSIVLSDSGRLDEGSSIRGGELERDSQEVGRETVREPLMCHDLDIHALAQRGDTAAIAAMLQENPSLNLSARDAQDVTPLHWAAINAHMGTCRLLIDSGADIDAIGGELKATPLQWAARNGHLYVVHLLISRGADPNIHDSQGFNTLHLITHSSAVMPLLYMLHQPVAIDEKDTDGHTALMWAAYQGDALSVDLLIRHGASVNSTDNAGMTPLHWAAVKGNKVSIMHLVEAGASLDAKEEAGKTPRDMAEELRGLVPFQKGLEEAGWSIDGVKMEGKLGPRNTILAIFLLPIAVLWLIFSTFKWLPVYVGVPFAIAEFMGMQYTVVLVLLGHIKAQDKVSTSNYFASIITASLIWVGYCWISRFAVNTPGYAFSNLGFIIMFVGCCWTFWTAIVTDPGFVPKGQQDAEIKEVLEDLVDAGRLNGTNFCIVCMARKPLRSKHCRTCNRCVARFDHHCPWIWNCVGAKNHRSFLLFVLFLIGGIILFIRLTIAYIQQNAPEYIPTPNPGLTTCDISTTLCQAGDFDPFLLCMALWSTLQLTWTSVLAISHLWQVSRQMTTFEVSNLGRYGFMGGRGGQSLRDQSGAMLKQAAAVGAGIGMSGAGEEAAGPPGAEAGPEGNALLPPPGGHVHGPQCRHGDHARGHSHGVLHICGALWKTLTGPLMTILGLDRFTKGKALGGMKRAGRDQNPFDMGMVKNCIDFWLPDNDVDYMTVYEIPPGGWRAYRRKLAMDKRVPGGKGRYEVVSEQEV.

The Cytoplasmic portion of the chain corresponds to 1-311; the sequence is MDQEMTTVAS…MEGKLGPRNT (311 aa). The interval 38-58 is disordered; sequence RLDEGSSIRGGELERDSQEVG. ANK repeat units lie at residues 68 to 97, 103 to 132, 137 to 166, 170 to 199, 203 to 232, and 236 to 265; these read CHDLDIHALAQRGDTAAIAAMLQENPSLNL, QDVTPLHWAAINAHMGTCRLLIDSGADIDA, LKATPLQWAARNGHLYVVHLLISRGADPNI, QGFNTLHLITHSSAVMPLLYMLHQPVAIDE, DGHTALMWAAYQGDALSVDLLIRHGASVNS, and AGMTPLHWAAVKGNKVSIMHLVEAGASLDA. Residues 312 to 332 form a helical membrane-spanning segment; it reads ILAIFLLPIAVLWLIFSTFKW. Residues 333-336 lie on the Lumenal side of the membrane; that stretch reads LPVY. Residues 337 to 357 form a helical membrane-spanning segment; it reads VGVPFAIAEFMGMQYTVVLVL. Topologically, residues 358–368 are cytoplasmic; it reads LGHIKAQDKVS. Residues 369–389 traverse the membrane as a helical segment; that stretch reads TSNYFASIITASLIWVGYCWI. Residues 390 to 402 lie on the Lumenal side of the membrane; that stretch reads SRFAVNTPGYAFS. The helical transmembrane segment at 403–423 threads the bilayer; sequence NLGFIIMFVGCCWTFWTAIVT. The Cytoplasmic portion of the chain corresponds to 424 to 498; the sequence is DPGFVPKGQQ…NCVGAKNHRS (75 aa). The 51-residue stretch at 454–504 folds into the DHHC domain; that stretch reads NFCIVCMARKPLRSKHCRTCNRCVARFDHHCPWIWNCVGAKNHRSFLLFVL. C484 acts as the S-palmitoyl cysteine intermediate in catalysis. The chain crosses the membrane as a helical span at residues 499 to 519; the sequence is FLLFVLFLIGGIILFIRLTIA. Topologically, residues 520 to 553 are lumenal; sequence YIQQNAPEYIPTPNPGLTTCDISTTLCQAGDFDP. A helical transmembrane segment spans residues 554-574; that stretch reads FLLCMALWSTLQLTWTSVLAI. At 575–776 the chain is on the cytoplasmic side; that stretch reads SHLWQVSRQM…RYEVVSEQEV (202 aa). The segment at 628–665 is disordered; it reads GAGEEAAGPPGAEAGPEGNALLPPPGGHVHGPQCRHGD. Over residues 629-645 the composition is skewed to low complexity; the sequence is AGEEAAGPPGAEAGPEG.

It belongs to the DHHC palmitoyltransferase family. AKR/ZDHHC17 subfamily.

The protein localises to the early endosome membrane. It is found in the golgi apparatus membrane. It catalyses the reaction L-cysteinyl-[protein] + hexadecanoyl-CoA = S-hexadecanoyl-L-cysteinyl-[protein] + CoA. In terms of biological role, palmitoyltransferase specific for casein kinase 1. In Cryptococcus neoformans var. neoformans serotype D (strain B-3501A) (Filobasidiella neoformans), this protein is Palmitoyltransferase AKR1 (AKR1).